We begin with the raw amino-acid sequence, 478 residues long: UDP-N-acetylmuramate--L-alanine ligase (478 aa).

Residue 122-128 (GTHGKTT) participates in ATP binding.

It belongs to the MurCDEF family.

It localises to the cytoplasm. The catalysed reaction is UDP-N-acetyl-alpha-D-muramate + L-alanine + ATP = UDP-N-acetyl-alpha-D-muramoyl-L-alanine + ADP + phosphate + H(+). It participates in cell wall biogenesis; peptidoglycan biosynthesis. Its function is as follows. Cell wall formation. The polypeptide is UDP-N-acetylmuramate--L-alanine ligase (Stenotrophomonas maltophilia (strain R551-3)).